We begin with the raw amino-acid sequence, 178 residues long: Fatty-acid and retinol-binding protein 1 (178 aa).

Positions 1-16 (MYHRLILLALVGTTMA) are cleaved as a signal peptide. 2 coiled-coil regions span residues 67-89 (DAALEALKDKSDKLYKNAVELRN) and 130-153 (KQAARDIIAKYQALSEETKEELKV).

This sequence belongs to the fatty-acid and retinol-binding protein (FARBP) family. In terms of processing, not glycosylated.

Its subcellular location is the secreted. Binds retinol and different fatty acids. This chain is Fatty-acid and retinol-binding protein 1, found in Brugia pahangi (Filarial nematode worm).